The sequence spans 444 residues: Acetyl-CoA--deacetylcephalosporin C acetyltransferase (444 aa).

The propeptide occupies 1-71; it reads MLPSAQVARL…PQIANRFEAS (71 aa). The region spanning 112-425 is the AB hydrolase-1 domain; the sequence is VIVCHTLTSS…DTNEGHDFFV (314 aa). Active-site residues include S208 and H421.

Belongs to the AB hydrolase superfamily. MetX family. In terms of assembly, heterodimer of chain I and chain II.

The catalysed reaction is deacetylcephalosporin C + acetyl-CoA = cephalosporin C + CoA. It functions in the pathway antibiotic biosynthesis; cephalosporin C biosynthesis. Catalyzes the conversion of deacetylcephalosporin C to cephalosporin C. The polypeptide is Acetyl-CoA--deacetylcephalosporin C acetyltransferase (CEFG) (Hapsidospora chrysogena (Acremonium chrysogenum)).